We begin with the raw amino-acid sequence, 199 residues long: uncharacterized protein (199 aa).

Residues 17-37 form a helical membrane-spanning segment; sequence AGAVTLGIGFFALASALWFLI.

It is found in the membrane. This is an uncharacterized protein from Homo sapiens (Human).